Here is a 241-residue protein sequence, read N- to C-terminus: Phosphoadenosine 5'-phosphosulfate reductase (241 aa).

Cysteine 235 (nucleophile; cysteine thiosulfonate intermediate) is an active-site residue.

The protein belongs to the PAPS reductase family. CysH subfamily.

It localises to the cytoplasm. It catalyses the reaction [thioredoxin]-disulfide + sulfite + adenosine 3',5'-bisphosphate + 2 H(+) = [thioredoxin]-dithiol + 3'-phosphoadenylyl sulfate. It participates in sulfur metabolism; hydrogen sulfide biosynthesis; sulfite from sulfate: step 3/3. Functionally, catalyzes the formation of sulfite from phosphoadenosine 5'-phosphosulfate (PAPS) using thioredoxin as an electron donor. The chain is Phosphoadenosine 5'-phosphosulfate reductase from Xanthomonas euvesicatoria pv. vesicatoria (strain 85-10) (Xanthomonas campestris pv. vesicatoria).